A 933-amino-acid polypeptide reads, in one-letter code: Protein translocase subunit SecA (933 aa).

ATP contacts are provided by residues Gln-90, 108–112, and Asp-504; that span reads GEGKT. Residues 539–570 form a disordered region; it reads GMGSNNRRPQGFGQDSKKKKWQPSADIFPTDL.

Belongs to the SecA family. As to quaternary structure, monomer and homodimer. Part of the essential Sec protein translocation apparatus which comprises SecA, SecYEG and auxiliary proteins SecDF. Other proteins may also be involved.

It localises to the cell inner membrane. It is found in the cellular thylakoid membrane. Its subcellular location is the cytoplasm. The enzyme catalyses ATP + H2O + cellular proteinSide 1 = ADP + phosphate + cellular proteinSide 2.. Part of the Sec protein translocase complex. Interacts with the SecYEG preprotein conducting channel. Has a central role in coupling the hydrolysis of ATP to the transfer of proteins into and across the cell membrane, serving as an ATP-driven molecular motor driving the stepwise translocation of polypeptide chains across the membrane. In terms of biological role, probably participates in protein translocation into and across both the cytoplasmic and thylakoid membranes in cyanobacterial cells. This is Protein translocase subunit SecA from Crocosphaera subtropica (strain ATCC 51142 / BH68) (Cyanothece sp. (strain ATCC 51142)).